Reading from the N-terminus, the 306-residue chain is Pseudouridine-5'-phosphate glycosidase (306 aa).

E28 functions as the Proton donor in the catalytic mechanism. Substrate-binding residues include K89 and V109. Residue D139 participates in Mn(2+) binding. S141 to D143 is a substrate binding site. The Nucleophile role is filled by K160.

It belongs to the pseudouridine-5'-phosphate glycosidase family. Homotrimer. The cofactor is Mn(2+).

The enzyme catalyses D-ribose 5-phosphate + uracil = psi-UMP + H2O. Functionally, catalyzes the reversible cleavage of pseudouridine 5'-phosphate (PsiMP) to ribose 5-phosphate and uracil. Functions biologically in the cleavage direction, as part of a pseudouridine degradation pathway. This chain is Pseudouridine-5'-phosphate glycosidase, found in Gemmatimonas aurantiaca (strain DSM 14586 / JCM 11422 / NBRC 100505 / T-27).